The sequence spans 331 residues: MAKVYYDEDANLELLRGKTVAIIGYGSQGHAHALNLKDSGVNVIVGLYEGSKSRKIAESQGLQVLNTKDAVKNADVIMMLIPDEKQAKVYMEDVCMNLKEGDALVFAHGFNIHFNQIVPPEYVDVYMIAPKGPGHMVRREYVRGGGVPCLVAVAQDYTGKAKEYALAYTKGIGGTKGGVLETTFKDETETDLFGEQAVLCGGLTALMKAGFETLVEAGYAPENAYFECVHEMKLIVDLIYEGGFNSMRHSISDTAEFGEYSVGNRIVTEETKKEMKKVLREIQDGTFANAWLVENQVNRPKFNAKRRIESEHPIEKVGVELRAMMPWLKEN.

Positions 2-182 (AKVYYDEDAN…GGTKGGVLET (181 aa)) constitute a KARI N-terminal Rossmann domain. NADP(+) is bound by residues 25–28 (YGSQ), Ser-51, Ser-53, and 83–86 (DEKQ). The active site involves His-108. Gly-134 is an NADP(+) binding site. The KARI C-terminal knotted domain maps to 183–328 (TFKDETETDL…VELRAMMPWL (146 aa)). Positions 191, 195, 227, and 231 each coordinate Mg(2+). Ser-252 provides a ligand contact to substrate.

The protein belongs to the ketol-acid reductoisomerase family. Mg(2+) is required as a cofactor.

The enzyme catalyses (2R)-2,3-dihydroxy-3-methylbutanoate + NADP(+) = (2S)-2-acetolactate + NADPH + H(+). The catalysed reaction is (2R,3R)-2,3-dihydroxy-3-methylpentanoate + NADP(+) = (S)-2-ethyl-2-hydroxy-3-oxobutanoate + NADPH + H(+). Its pathway is amino-acid biosynthesis; L-isoleucine biosynthesis; L-isoleucine from 2-oxobutanoate: step 2/4. It functions in the pathway amino-acid biosynthesis; L-valine biosynthesis; L-valine from pyruvate: step 2/4. Its function is as follows. Involved in the biosynthesis of branched-chain amino acids (BCAA). Catalyzes an alkyl-migration followed by a ketol-acid reduction of (S)-2-acetolactate (S2AL) to yield (R)-2,3-dihydroxy-isovalerate. In the isomerase reaction, S2AL is rearranged via a Mg-dependent methyl migration to produce 3-hydroxy-3-methyl-2-ketobutyrate (HMKB). In the reductase reaction, this 2-ketoacid undergoes a metal-dependent reduction by NADPH to yield (R)-2,3-dihydroxy-isovalerate. This chain is Ketol-acid reductoisomerase (NADP(+)), found in Clostridium novyi (strain NT).